Consider the following 340-residue polypeptide: Probable dual-specificity RNA methyltransferase RlmN (340 aa).

The active-site Proton acceptor is Glu-93. The Radical SAM core domain occupies 99–327 (TAKRLTVCVS…VSVRYSRGLE (229 aa)). Cys-106 and Cys-332 are oxidised to a cystine. Residues Cys-113, Cys-117, and Cys-120 each coordinate [4Fe-4S] cluster. S-adenosyl-L-methionine contacts are provided by residues 160 to 161 (GE), Ser-190, 213 to 215 (SLH), and Asn-289. The S-methylcysteine intermediate role is filled by Cys-332.

This sequence belongs to the radical SAM superfamily. RlmN family. Requires [4Fe-4S] cluster as cofactor.

The protein resides in the cytoplasm. It catalyses the reaction adenosine(2503) in 23S rRNA + 2 reduced [2Fe-2S]-[ferredoxin] + 2 S-adenosyl-L-methionine = 2-methyladenosine(2503) in 23S rRNA + 5'-deoxyadenosine + L-methionine + 2 oxidized [2Fe-2S]-[ferredoxin] + S-adenosyl-L-homocysteine. The catalysed reaction is adenosine(37) in tRNA + 2 reduced [2Fe-2S]-[ferredoxin] + 2 S-adenosyl-L-methionine = 2-methyladenosine(37) in tRNA + 5'-deoxyadenosine + L-methionine + 2 oxidized [2Fe-2S]-[ferredoxin] + S-adenosyl-L-homocysteine. Specifically methylates position 2 of adenine 2503 in 23S rRNA and position 2 of adenine 37 in tRNAs. This chain is Probable dual-specificity RNA methyltransferase RlmN, found in Rippkaea orientalis (strain PCC 8801 / RF-1) (Cyanothece sp. (strain PCC 8801)).